A 570-amino-acid polypeptide reads, in one-letter code: Pleckstrin homology domain-containing family D member 1 (570 aa).

The segment covering 1–13 (MTTKTTPKELKAK) has biased composition (basic and acidic residues). The disordered stretch occupies residues 1 to 42 (MTTKTTPKELKAKKESKKKGSAPEPPKNGPPRTSPPNTIEKK). The segment covering 23–34 (PEPPKNGPPRTS) has biased composition (pro residues). In terms of domain architecture, PH spans 83-192 (GVQNYGILMK…WLKALRSATK (110 aa)). Positions 202-448 (ETMIRELENR…TGAQMTELQE (247 aa)) form a coiled coil. Positions 542-551 (SKRGIRSSFR) are enriched in basic residues. A disordered region spans residues 542 to 570 (SKRGIRSSFRKKTDSITTQPREKEPLMQL). Basic and acidic residues predominate over residues 561–570 (PREKEPLMQL).

It belongs to the PLEKHD1 family.

In Caenorhabditis elegans, this protein is Pleckstrin homology domain-containing family D member 1.